We begin with the raw amino-acid sequence, 201 residues long: dITP/XTP pyrophosphatase (201 aa).

8–13 provides a ligand contact to substrate; it reads SNNPGK. E40 and D69 together coordinate Mg(2+). D69 (proton acceptor) is an active-site residue. Substrate is bound by residues S70, 155–158, K178, and 183–184; these read FGYD and HR.

It belongs to the HAM1 NTPase family. As to quaternary structure, homodimer. Requires Mg(2+) as cofactor.

It catalyses the reaction XTP + H2O = XMP + diphosphate + H(+). The catalysed reaction is dITP + H2O = dIMP + diphosphate + H(+). It carries out the reaction ITP + H2O = IMP + diphosphate + H(+). Functionally, pyrophosphatase that catalyzes the hydrolysis of nucleoside triphosphates to their monophosphate derivatives, with a high preference for the non-canonical purine nucleotides XTP (xanthosine triphosphate), dITP (deoxyinosine triphosphate) and ITP. Seems to function as a house-cleaning enzyme that removes non-canonical purine nucleotides from the nucleotide pool, thus preventing their incorporation into DNA/RNA and avoiding chromosomal lesions. In Ralstonia nicotianae (strain ATCC BAA-1114 / GMI1000) (Ralstonia solanacearum), this protein is dITP/XTP pyrophosphatase.